The following is a 140-amino-acid chain: ATP synthase epsilon chain (140 aa).

It belongs to the ATPase epsilon chain family. As to quaternary structure, F-type ATPases have 2 components, CF(1) - the catalytic core - and CF(0) - the membrane proton channel. CF(1) has five subunits: alpha(3), beta(3), gamma(1), delta(1), epsilon(1). CF(0) has three main subunits: a, b and c.

The protein resides in the cell inner membrane. Produces ATP from ADP in the presence of a proton gradient across the membrane. The polypeptide is ATP synthase epsilon chain (Stenotrophomonas maltophilia (strain R551-3)).